A 127-amino-acid polypeptide reads, in one-letter code: Large ribosomal subunit protein uL22 (127 aa).

Positions 106–117 (GAPEGVPVGGAV) are enriched in low complexity. Positions 106–127 (GAPEGVPVGGAVDTPGDEEEEE) are disordered.

The protein belongs to the universal ribosomal protein uL22 family. In terms of assembly, part of the 50S ribosomal subunit.

This protein binds specifically to 23S rRNA; its binding is stimulated by other ribosomal proteins, e.g. L4, L17, and L20. It is important during the early stages of 50S assembly. It makes multiple contacts with different domains of the 23S rRNA in the assembled 50S subunit and ribosome. Its function is as follows. The globular domain of the protein is located near the polypeptide exit tunnel on the outside of the subunit, while an extended beta-hairpin is found that lines the wall of the exit tunnel in the center of the 70S ribosome. The chain is Large ribosomal subunit protein uL22 from Rubrobacter xylanophilus (strain DSM 9941 / JCM 11954 / NBRC 16129 / PRD-1).